An 860-amino-acid chain; its full sequence is Mycobactin import ATP-binding/permease protein IrtA (860 aa).

Residues 1–293 (MARGIQGVMM…GRLLAPLKTT (293 aa)) are Cytoplasmic-facing. Residues 15-124 (ARDHQATVVS…LGSAGFSVPE (110 aa)) enclose the FAD-binding FR-type domain. FAD-binding positions include 70–73 (RAYT), 87–91 (DVVLH), 97–98 (AS), and 238–240 (TEG). The tract at residues 242–275 (AMGTKRGDDDKTPEVNPAPRADKPEAPAPAAAGR) is disordered. A helical transmembrane segment spans residues 294 to 314 (LIISGVLQAIITLVQLAPFVL). The region spanning 295–577 (IISGVLQAII…IAYGLGGIRG (283 aa)) is the ABC transmembrane type-1 domain. Topologically, residues 315–335 (LVELARLLLSGASSDRLWTLG) are periplasmic. A helical transmembrane segment spans residues 336 to 356 (VVAISLLGTGSFLAAALTLWL). Residues 357–409 (HLVDARFARDLRTGLLTKMSRLPLGWFTARGSGSIKQLVQDDTLSLHYLITHA) lie on the Cytoplasmic side of the membrane. A helical transmembrane segment spans residues 410-430 (IPDAVAAVIAPVAVLVYLFVV). Residues 431–433 (DWR) lie on the Periplasmic side of the membrane. Residues 434–454 (LALVMFVPVLIYLVLMTVMTI) traverse the membrane as a helical segment. Residues 455-525 (QSGPKIAQSQ…KKSMMDLVTR (71 aa)) are Cytoplasmic-facing. A helical transmembrane segment spans residues 526–546 (PGTFLWLIVAVGTPMITSGAM). The Periplasmic portion of the chain corresponds to 547 to 550 (DPVD). A helical membrane pass occupies residues 551–571 (ILPFLLLGTTFGVRLLGIAYG). Topologically, residues 572–860 (LGGIRGGMLA…AAGPTGEAVR (289 aa)) are cytoplasmic. Residues 609 to 842 (VVFDNVTFGY…AGRYRQLWET (234 aa)) form the ABC transporter domain. 642–649 (GPSGSGKS) contributes to the ATP binding site.

The protein belongs to the ABC transporter superfamily. Siderophore-Fe(3+) uptake transporter (SIUT) (TC 3.A.1.21) family. As to quaternary structure, forms a heterodimer with IrtB. FAD serves as cofactor.

The protein resides in the cell inner membrane. Part of the ABC transporter complex IrtAB involved in the import of iron-bound mycobactin (Fe-MBT) and carboxymycobactin (Fe-cMBT). Has a preference for Fe-MBT over Fe-cMBT. Mycobactins are then reduced by the siderophore interaction domain to facilitate iron release in the bacterial cell. Transmembrane domains (TMD) form a pore in the membrane and the ATP-binding domain (NBD) is responsible for energy generation. This is Mycobactin import ATP-binding/permease protein IrtA from Mycolicibacterium smegmatis (strain ATCC 700084 / mc(2)155) (Mycobacterium smegmatis).